Here is a 211-residue protein sequence, read N- to C-terminus: N-(5'-phosphoribosyl)anthranilate isomerase (211 aa).

Belongs to the TrpF family.

It catalyses the reaction N-(5-phospho-beta-D-ribosyl)anthranilate = 1-(2-carboxyphenylamino)-1-deoxy-D-ribulose 5-phosphate. The protein operates within amino-acid biosynthesis; L-tryptophan biosynthesis; L-tryptophan from chorismate: step 3/5. In Hyphomonas neptunium (strain ATCC 15444), this protein is N-(5'-phosphoribosyl)anthranilate isomerase.